Here is a 339-residue protein sequence, read N- to C-terminus: Adenosine deaminase (339 aa).

Zn(2+) is bound by residues histidine 15 and histidine 17. Substrate is bound by residues histidine 17, aspartate 19, and glycine 172. Position 199 (histidine 199) interacts with Zn(2+). Glutamate 202 serves as the catalytic Proton donor. Aspartate 279 provides a ligand contact to Zn(2+).

It belongs to the metallo-dependent hydrolases superfamily. Adenosine and AMP deaminases family. Adenosine deaminase subfamily. Zn(2+) serves as cofactor.

The enzyme catalyses adenosine + H2O + H(+) = inosine + NH4(+). The catalysed reaction is 2'-deoxyadenosine + H2O + H(+) = 2'-deoxyinosine + NH4(+). Catalyzes the hydrolytic deamination of adenosine and 2-deoxyadenosine. This Lacticaseibacillus paracasei (strain ATCC 334 / BCRC 17002 / CCUG 31169 / CIP 107868 / KCTC 3260 / NRRL B-441) (Lactobacillus paracasei) protein is Adenosine deaminase.